We begin with the raw amino-acid sequence, 266 residues long: MTQYYFLSSFLPTQLPESVPLFSISDLDDLLYLNLSENDLCNYGLLKRFFDFENFAFFWAGKPIPFSFGEVTQENVERMLSSQQWSDDNDFEDFFKDFLMNHKSSQDRLNHFSDLFREFLSYHQTNSSKFLRDYFRFQQQLRVVLAGFRARVLNMDVSYVLRDEDSSDPVVLEVLMQKDSPNYELPEEFSDLQGVLDDYGLLPHTLNRALALYQFHKLEGFCSDSYFDGNVILARCATYMFAIRNSLASVEKGREIINHIEKAIKW.

The protein belongs to the chlamydial CPn_0087/CT_309/TC_0583 family.

This is an uncharacterized protein from Chlamydia pneumoniae (Chlamydophila pneumoniae).